A 247-amino-acid polypeptide reads, in one-letter code: Flagellin B1 (247 aa).

A propeptide spanning residues 1-20 (MNKLLRKVRKAFSLKADNKA) is cleaved from the precursor.

Belongs to the archaeal flagellin family. In terms of processing, glycosylated.

It localises to the archaeal flagellum. In terms of biological role, flagellin is the subunit protein which polymerizes to form the filaments of archaeal flagella. This Thermoplasma volcanium (strain ATCC 51530 / DSM 4299 / JCM 9571 / NBRC 15438 / GSS1) protein is Flagellin B1.